Reading from the N-terminus, the 1233-residue chain is uncharacterized protein (1233 aa).

Disordered stretches follow at residues 32 to 51 (SETS…TPKP), 510 to 529 (ATTN…PVPD), and 882 to 915 (EVIE…IERS). Acidic residues-rich tracts occupy residues 513–529 (NEEE…PVPD) and 882–905 (EVIE…EDEG). Positions 906 to 915 (DNKQRVIERS) are enriched in basic and acidic residues.

This is an uncharacterized protein from Dictyostelium discoideum (Social amoeba).